Reading from the N-terminus, the 490-residue chain is Betaine aldehyde dehydrogenase (490 aa).

D93 is a binding site for K(+). Residue 150-152 participates in NAD(+) binding; sequence GAW. K162 serves as the catalytic Charge relay system. NAD(+) is bound at residue 176 to 179; that stretch reads KPSE. V180 is a binding site for K(+). An NAD(+)-binding site is contributed by 230–233; sequence GIAS. L246 lines the K(+) pocket. The active-site Proton acceptor is the E252. NAD(+)-binding residues include G254, C286, and E387. The active-site Nucleophile is the C286. The residue at position 286 (C286) is a Cysteine sulfenic acid (-SOH). K(+) contacts are provided by K457 and G460. E464 acts as the Charge relay system in catalysis.

Belongs to the aldehyde dehydrogenase family. Dimer of dimers. It depends on K(+) as a cofactor.

The catalysed reaction is betaine aldehyde + NAD(+) + H2O = glycine betaine + NADH + 2 H(+). The protein operates within amine and polyamine biosynthesis; betaine biosynthesis via choline pathway; betaine from betaine aldehyde: step 1/1. Functionally, involved in the biosynthesis of the osmoprotectant glycine betaine. Catalyzes the irreversible oxidation of betaine aldehyde to the corresponding acid. This Yersinia pseudotuberculosis serotype O:3 (strain YPIII) protein is Betaine aldehyde dehydrogenase.